Reading from the N-terminus, the 90-residue chain is Small ribosomal subunit protein uS15c (90 aa).

This sequence belongs to the universal ribosomal protein uS15 family. Part of the 30S ribosomal subunit.

The protein resides in the plastid. It localises to the chloroplast. The protein is Small ribosomal subunit protein uS15c (rps15) of Daucus carota (Wild carrot).